Reading from the N-terminus, the 182-residue chain is Vomeronasal secretory protein 1 (182 aa).

Positions 1-18 (MRALLLIISFCLVAVLQA) are cleaved as a signal peptide. N-linked (GlcNAc...) asparagine glycosylation is present at Asn30. Cys76 and Cys168 are disulfide-bonded.

This sequence belongs to the calycin superfamily. Lipocalin family. In terms of tissue distribution, specifically expressed in vomeronasal and posterior glands of the nasal septum, the ducts of which open into the lumen of the vomeronasal organ.

It localises to the secreted. In terms of biological role, transport of lipophilic molecules, possible pheromone-carrier. This chain is Vomeronasal secretory protein 1 (Lcn3), found in Mus musculus (Mouse).